We begin with the raw amino-acid sequence, 158 residues long: NAD(P)H-quinone oxidoreductase subunit J, chloroplastic (158 aa).

Belongs to the complex I 30 kDa subunit family. In terms of assembly, NDH is composed of at least 16 different subunits, 5 of which are encoded in the nucleus.

It is found in the plastid. The protein localises to the chloroplast thylakoid membrane. It carries out the reaction a plastoquinone + NADH + (n+1) H(+)(in) = a plastoquinol + NAD(+) + n H(+)(out). The enzyme catalyses a plastoquinone + NADPH + (n+1) H(+)(in) = a plastoquinol + NADP(+) + n H(+)(out). NDH shuttles electrons from NAD(P)H:plastoquinone, via FMN and iron-sulfur (Fe-S) centers, to quinones in the photosynthetic chain and possibly in a chloroplast respiratory chain. The immediate electron acceptor for the enzyme in this species is believed to be plastoquinone. Couples the redox reaction to proton translocation, and thus conserves the redox energy in a proton gradient. This chain is NAD(P)H-quinone oxidoreductase subunit J, chloroplastic, found in Oenothera argillicola (Appalachian evening primrose).